Here is a 172-residue protein sequence, read N- to C-terminus: Large ribosomal subunit protein uL10 (172 aa).

It belongs to the universal ribosomal protein uL10 family. In terms of assembly, part of the ribosomal stalk of the 50S ribosomal subunit. The N-terminus interacts with L11 and the large rRNA to form the base of the stalk. The C-terminus forms an elongated spine to which L12 dimers bind in a sequential fashion forming a multimeric L10(L12)X complex.

In terms of biological role, forms part of the ribosomal stalk, playing a central role in the interaction of the ribosome with GTP-bound translation factors. The polypeptide is Large ribosomal subunit protein uL10 (Chlamydia trachomatis serovar A (strain ATCC VR-571B / DSM 19440 / HAR-13)).